The following is a 588-amino-acid chain: Putative pentatricopeptide repeat-containing protein At5g52630 (588 aa).

PPR repeat units follow at residues 14-48 (NYNQICDLLLSSARTRSTIKGLQLHGYVVKSGLSL), 49-79 (IPLVANNLINFYSKSQLPFDSRRAFEDSPQK), 80-114 (SSTTWSSIISCFAQNELPWMSLEFLKKMMAGNLRP), 115-149 (DDHVLPSATKSCAILSRCDIGRSVHCLSMKTGYDA), 150-180 (DVFVGSSLVDMYAKCGEIVYARKMFDEMPQR), 181-215 (NVVTWSGMMYGYAQMGENEEALWLFKEALFENLAV), 216-250 (NDYSFSSVISVCANSTLLELGRQIHGLSIKSSFDS), 251-281 (SSFVGSSLVSLYSKCGVPEGAYQVFNEVPVK), 282-316 (NLGIWNAMLKAYAQHSHTQKVIELFKRMKLSGMKP), 317-351 (NFITFLNVLNACSHAGLVDEGRYYFDQMKESRIEP), and 352-386 (TDKHYASLVDMLGRAGRLQEALEVITNMPIDPTES). A type E motif region spans residues 387 to 462 (VWGALLTSCT…ETGLSWVEER (76 aa)). The interval 463–493 (NKVHTFAAGERRHEKSKEIYEKLAELGEEME) is type E(+) motif. The type DYW motif stretch occupies residues 494-588 (KAGYIADTSY…DGKCSCNDYW (95 aa)).

Belongs to the PPR family. PCMP-H subfamily.

The sequence is that of Putative pentatricopeptide repeat-containing protein At5g52630 (PCMP-H52) from Arabidopsis thaliana (Mouse-ear cress).